We begin with the raw amino-acid sequence, 350 residues long: Holliday junction branch migration complex subunit RuvB (350 aa).

The tract at residues 4-184 (TDRLIAAQPQ…FGIVQRLEFY (181 aa)) is large ATPase domain (RuvB-L). ATP-binding positions include Ile-23, Arg-24, Gly-65, Lys-68, Thr-69, Thr-70, 131-133 (EDY), Arg-174, Tyr-184, and Arg-221. Thr-69 is a Mg(2+) binding site. Positions 185–255 (AVEELTEIVV…IADQALNMLH (71 aa)) are small ATPAse domain (RuvB-S). The interval 258–350 (RHGLDHMDRR…PLTPPGESDA (93 aa)) is head domain (RuvB-H). DNA contacts are provided by Arg-294, Arg-313, and Arg-318.

Belongs to the RuvB family. As to quaternary structure, homohexamer. Forms an RuvA(8)-RuvB(12)-Holliday junction (HJ) complex. HJ DNA is sandwiched between 2 RuvA tetramers; dsDNA enters through RuvA and exits via RuvB. An RuvB hexamer assembles on each DNA strand where it exits the tetramer. Each RuvB hexamer is contacted by two RuvA subunits (via domain III) on 2 adjacent RuvB subunits; this complex drives branch migration. In the full resolvosome a probable DNA-RuvA(4)-RuvB(12)-RuvC(2) complex forms which resolves the HJ.

It localises to the cytoplasm. It catalyses the reaction ATP + H2O = ADP + phosphate + H(+). Its function is as follows. The RuvA-RuvB-RuvC complex processes Holliday junction (HJ) DNA during genetic recombination and DNA repair, while the RuvA-RuvB complex plays an important role in the rescue of blocked DNA replication forks via replication fork reversal (RFR). RuvA specifically binds to HJ cruciform DNA, conferring on it an open structure. The RuvB hexamer acts as an ATP-dependent pump, pulling dsDNA into and through the RuvAB complex. RuvB forms 2 homohexamers on either side of HJ DNA bound by 1 or 2 RuvA tetramers; 4 subunits per hexamer contact DNA at a time. Coordinated motions by a converter formed by DNA-disengaged RuvB subunits stimulates ATP hydrolysis and nucleotide exchange. Immobilization of the converter enables RuvB to convert the ATP-contained energy into a lever motion, pulling 2 nucleotides of DNA out of the RuvA tetramer per ATP hydrolyzed, thus driving DNA branch migration. The RuvB motors rotate together with the DNA substrate, which together with the progressing nucleotide cycle form the mechanistic basis for DNA recombination by continuous HJ branch migration. Branch migration allows RuvC to scan DNA until it finds its consensus sequence, where it cleaves and resolves cruciform DNA. This Chromohalobacter salexigens (strain ATCC BAA-138 / DSM 3043 / CIP 106854 / NCIMB 13768 / 1H11) protein is Holliday junction branch migration complex subunit RuvB.